Here is a 180-residue protein sequence, read N- to C-terminus: UPF0227 protein Ent638_1623 (180 aa).

This sequence belongs to the UPF0227 family.

The sequence is that of UPF0227 protein Ent638_1623 from Enterobacter sp. (strain 638).